The primary structure comprises 60 residues: Large ribosomal subunit protein bL32 (60 aa).

Basic residues predominate over residues methionine 1–arginine 16. Positions methionine 1–aspartate 20 are disordered.

The protein belongs to the bacterial ribosomal protein bL32 family.

In Chlamydia pneumoniae (Chlamydophila pneumoniae), this protein is Large ribosomal subunit protein bL32 (rpmF).